The chain runs to 418 residues: Coenzyme A biosynthesis bifunctional protein CoaBC (418 aa).

Positions 1-195 (MVDHKRIPKQ…ALPYDLAGRK (195 aa)) are phosphopantothenoylcysteine decarboxylase. The interval 196–418 (LLVTAGGTRE…IVTFLAGCSS (223 aa)) is phosphopantothenate--cysteine ligase. Residues aspartate 285, lysine 295, phenylalanine 336, lysine 354, and lysine 358 each contribute to the CTP site.

It in the N-terminal section; belongs to the HFCD (homo-oligomeric flavin containing Cys decarboxylase) superfamily. In the C-terminal section; belongs to the PPC synthetase family. The cofactor is Mg(2+). It depends on FMN as a cofactor.

It catalyses the reaction N-[(R)-4-phosphopantothenoyl]-L-cysteine + H(+) = (R)-4'-phosphopantetheine + CO2. The catalysed reaction is (R)-4'-phosphopantothenate + L-cysteine + CTP = N-[(R)-4-phosphopantothenoyl]-L-cysteine + CMP + diphosphate + H(+). The protein operates within cofactor biosynthesis; coenzyme A biosynthesis; CoA from (R)-pantothenate: step 2/5. It functions in the pathway cofactor biosynthesis; coenzyme A biosynthesis; CoA from (R)-pantothenate: step 3/5. Catalyzes two sequential steps in the biosynthesis of coenzyme A. In the first step cysteine is conjugated to 4'-phosphopantothenate to form 4-phosphopantothenoylcysteine. In the second step the latter compound is decarboxylated to form 4'-phosphopantotheine. This Mycobacterium bovis (strain ATCC BAA-935 / AF2122/97) protein is Coenzyme A biosynthesis bifunctional protein CoaBC.